A 202-amino-acid polypeptide reads, in one-letter code: Adenylate kinase (202 aa).

An ATP-binding site is contributed by 12-20 (GVPGVGKTT).

The protein belongs to the archaeal adenylate kinase family.

It localises to the cytoplasm. It carries out the reaction AMP + ATP = 2 ADP. This is Adenylate kinase (adkA) from Aeropyrum pernix (strain ATCC 700893 / DSM 11879 / JCM 9820 / NBRC 100138 / K1).